The following is a 399-amino-acid chain: uncharacterized protein (399 aa).

Transmembrane regions (helical) follow at residues 7-27, 33-53, 79-99, 131-151, 153-173, 208-228, 242-262, 296-316, 335-355, and 357-377; these read FSAL…LYLI, FLQI…FEVP, AFFP…IWAL, LLIT…SLNI, FPFL…SVFI, VLLI…ISRY, SLGY…TLTI, PLGI…HPIV, LNSG…GIIS, and AFGL…PIIL.

This sequence belongs to the major facilitator superfamily. Drug:H(+) antiporter-3 (DHA3) (TC 2.A.1.21) family.

It is found in the cell membrane. This is an uncharacterized protein from Bacillus subtilis (strain 168).